A 469-amino-acid polypeptide reads, in one-letter code: Aspartyl/glutamyl-tRNA(Asn/Gln) amidotransferase subunit B (469 aa).

The protein belongs to the GatB/GatE family. GatB subfamily. As to quaternary structure, heterotrimer of A, B and C subunits.

It carries out the reaction L-glutamyl-tRNA(Gln) + L-glutamine + ATP + H2O = L-glutaminyl-tRNA(Gln) + L-glutamate + ADP + phosphate + H(+). The enzyme catalyses L-aspartyl-tRNA(Asn) + L-glutamine + ATP + H2O = L-asparaginyl-tRNA(Asn) + L-glutamate + ADP + phosphate + 2 H(+). Its function is as follows. Allows the formation of correctly charged Asn-tRNA(Asn) or Gln-tRNA(Gln) through the transamidation of misacylated Asp-tRNA(Asn) or Glu-tRNA(Gln) in organisms which lack either or both of asparaginyl-tRNA or glutaminyl-tRNA synthetases. The reaction takes place in the presence of glutamine and ATP through an activated phospho-Asp-tRNA(Asn) or phospho-Glu-tRNA(Gln). The protein is Aspartyl/glutamyl-tRNA(Asn/Gln) amidotransferase subunit B of Methanococcus maripaludis (strain C7 / ATCC BAA-1331).